A 2002-amino-acid chain; its full sequence is MEQDRTNHVEGNRLSPFLIPSPPICQTEPLATKLQNGSPLPERAHPEVNGDTKWHSFKSYYGIPCMKGSQNSRVSPDFTQESRGYSKCLQNGGIKRTVSEPSLSGLLQIKKLKQDQKANGERRNFGVSQERNPGESSQPNVSDLSDKKESVSSVAQENAVKDFTSFSTHNCSGPENPELQILNEQEGKSANYHDKNIVLLKNKAVLMPNGATVSASSVEHTHGELLEKTLSQYYPDCVSIAVQKTTSHINAINSQATNELSCEITHPSHTSGQINSAQTSNSELPPKPAAVVSEACDADDADNASKLAAMLNTCSFQKPEQLQQQKSVFEICPSPAENNIQGTTKLASGEEFCSGSSSNLQAPGGSSERYLKQNEMNGAYFKQSSVFTKDSFSATTTPPPPSQLLLSPPPPLPQVPQLPSEGKSTLNGGVLEEHHHYPNQSNTTLLREVKIEGKPEAPPSQSPNPSTHVCSPSPMLSERPQNNCVNRNDIQTAGTMTVPLCSEKTRPMSEHLKHNPPIFGSSGELQDNCQQLMRNKEQEILKGRDKEQTRDLVPPTQHYLKPGWIELKAPRFHQAESHLKRNEASLPSILQYQPNLSNQMTSKQYTGNSNMPGGLPRQAYTQKTTQLEHKSQMYQVEMNQGQSQGTVDQHLQFQKPSHQVHFSKTDHLPKAHVQSLCGTRFHFQQRADSQTEKLMSPVLKQHLNQQASETEPFSNSHLLQHKPHKQAAQTQPSQSSHLPQNQQQQQKLQIKNKEEILQTFPHPQSNNDQQREGSFFGQTKVEECFHGENQYSKSSEFETHNVQMGLEEVQNINRRNSPYSQTMKSSACKIQVSCSNNTHLVSENKEQTTHPELFAGNKTQNLHHMQYFPNNVIPKQDLLHRCFQEQEQKSQQASVLQGYKNRNQDMSGQQAAQLAQQRYLIHNHANVFPVPDQGGSHTQTPPQKDTQKHAALRWHLLQKQEQQQTQQPQTESCHSQMHRPIKVEPGCKPHACMHTAPPENKTWKKVTKQENPPASCDNVQQKSIIETMEQHLKQFHAKSLFDHKALTLKSQKQVKVEMSGPVTVLTRQTTAAELDSHTPALEQQTTSSEKTPTKRTAASVLNNFIESPSKLLDTPIKNLLDTPVKTQYDFPSCRCVEQIIEKDEGPFYTHLGAGPNVAAIREIMEERFGQKGKAIRIERVIYTGKEGKSSQGCPIAKWVVRRSSSEEKLLCLVRERAGHTCEAAVIVILILVWEGIPLSLADKLYSELTETLRKYGTLTNRRCALNEERTCACQGLDPETCGASFSFGCSWSMYYNGCKFARSKIPRKFKLLGDDPKEEEKLESHLQNLSTLMAPTYKKLAPDAYNNQIEYEHRAPECRLGLKEGRPFSGVTACLDFCAHAHRDLHNMQNGSTLVCTLTREDNREFGGKPEDEQLHVLPLYKVSDVDEFGSVEAQEEKKRSGAIQVLSSFRRKVRMLAEPVKTCRQRKLEAKKAAAEKLSSLENSSNKNEKEKSAPSRTKQTENASQAKQLAELLRLSGPVMQQSQQPQPLQKQPPQPQQQQRPQQQQPHHPQTESVNSYSASGSTNPYMRRPNPVSPYPNSSHTSDIYGSTSPMNFYSTSSQAAGSYLNSSNPMNPYPGLLNQNTQYPSYQCNGNLSVDNCSPYLGSYSPQSQPMDLYRYPSQDPLSKLSLPPIHTLYQPRFGNSQSFTSKYLGYGNQNMQGDGFSSCTIRPNVHHVGKLPPYPTHEMDGHFMGATSRLPPNLSNPNMDYKNGEHHSPSHIIHNYSAAPGMFNSSLHALHLQNKENDMLSHTANGLSKMLPALNHDRTACVQGGLHKLSDANGQEKQPLALVQGVASGAEDNDEVWSDSEQSFLDPDIGGVAVAPTHGSILIECAKRELHATTPLKNPNRNHPTRISLVFYQHKSMNEPKHGLALWEAKMAEKAREKEEECEKYGPDYVPQKSHGKKVKREPAEPHETSEPTYLRFIKSLAERTMSVTTDSTVTTSPYAFTRVTGPYNRYI.

Basic and acidic residues predominate over residues 1–11 (MEQDRTNHVEG). A disordered region spans residues 1 to 22 (MEQDRTNHVEGNRLSPFLIPSP). Residues S15, S75, and S99 each carry the phosphoserine modification. Over residues 113 to 124 (KQDQKANGERRN) the composition is skewed to basic and acidic residues. Disordered regions lie at residues 113-154 (KQDQ…VSSV), 266-287 (HPSH…LPPK), 349-368 (GEEF…GSSE), 390-488 (DSFS…VNRN), 703-748 (LNQQ…QQKL), 930-949 (VPDQ…TQKH), and 1075-1095 (DSHT…PTKR). Composition is skewed to polar residues over residues 126–143 (GVSQ…NVSD) and 267–283 (PSHT…SNSE). Over residues 397–416 (TPPPPSQLLLSPPPPLPQVP) the composition is skewed to pro residues. Composition is skewed to polar residues over residues 479-488 (RPQNNCVNRN) and 703-718 (LNQQ…NSHL). Over residues 731–748 (QPSQSSHLPQNQQQQQKL) the composition is skewed to low complexity. Composition is skewed to polar residues over residues 935–944 (GSHTQTPPQK) and 1081–1095 (LEQQ…PTKR). 2 positions are modified to phosphoserine: S1107 and S1109. Zn(2+) contacts are provided by C1133, C1135, C1193, H1219, and C1221. R1261 is a 2-oxoglutarate binding site. Zn(2+) contacts are provided by C1271, C1273, C1289, and C1298. The tract at residues 1290–1303 (SWSMYYNGCKFARS) is interaction with DNA. A Glycyl lysine isopeptide (Lys-Gly) (interchain with G-Cter in ubiquitin) cross-link involves residue K1299. C1358 is a Zn(2+) binding site. C1374 contacts 2-oxoglutarate. Residue H1380 coordinates Zn(2+). Positions 1382 and 1384 each coordinate Fe cation. Residue N1387 participates in substrate binding. H1416 serves as a coordination point for 2-oxoglutarate. 2 disordered regions span residues 1475–1507 (AAEK…NASQ) and 1521–1587 (VMQQ…HTSD). Low complexity predominate over residues 1477–1487 (EKLSSLENSSN). Positions 1496–1507 (PSRTKQTENASQ) are enriched in polar residues. Composition is skewed to low complexity over residues 1523-1532 (QQSQQPQPLQ) and 1539-1551 (QQQQ…QPHH). The segment covering 1554-1568 (TESVNSYSASGSTNP) has biased composition (polar residues). R1682 is modified (asymmetric dimethylarginine). Fe cation is bound at residue H1881. Position 1896-1898 (1896-1898 (RIS)) interacts with 2-oxoglutarate. Residue 1902 to 1904 (YQH) coordinates substrate. H1912 serves as a coordination point for Zn(2+). Residues 1932 to 1961 (CEKYGPDYVPQKSHGKKVKREPAEPHETSE) are disordered. Basic and acidic residues predominate over residues 1951–1960 (REPAEPHETS).

This sequence belongs to the TET family. Interacts with HCFC1. Interacts with OGT. Interacts with PROSER1; this interaction mediates TET2 O-GlcNAcylation and stability by promoting the interaction between OGT and TET2. Directly interacts (via C-terminus) with the DCAF1 component of the CRL4(VprBP) E3 ubiquitin-protein ligase complex. Requires Fe(2+) as cofactor. It depends on Zn(2+) as a cofactor. In terms of processing, may be glycosylated. It is unclear whether interaction with OGT leads to GlcNAcylation. According to a report, it is not GlcNAcylated by OGT. In contrast, another group reports GlcNAcylation by OGT in mouse ortholog. Post-translationally, monoubiquitinated at Lys-1299 by the DCX (DDB1-CUL4-X-box) E3 ubiquitin-protein ligase complex called CRL4(VprBP) or CUL4A-RBX1-DDB1-DCAF1/VPRBP complex; this modification promotes binding to DNA. Acetylated. Deacetylase HDAC6 acts as a valine sensor by binding to valine through its primate-specific SE14 repeat region and deacetylates TET2 following valine deprivation which promotes TET2-dependent DNA demethylation. Broadly expressed. Highly expressed in hematopoietic cells; highest expression observed in granulocytes. Expression is reduced in granulocytes from peripheral blood of patients affected by myelodysplastic syndromes.

The protein resides in the nucleus. The protein localises to the chromosome. It catalyses the reaction a 5-methyl-2'-deoxycytidine in DNA + 2-oxoglutarate + O2 = a 5-hydroxymethyl-2'-deoxycytidine in DNA + succinate + CO2. It carries out the reaction a 5-hydroxymethyl-2'-deoxycytidine in DNA + 2-oxoglutarate + O2 = a 5-formyl-2'-deoxycytidine in DNA + succinate + CO2 + H2O. The catalysed reaction is a 5-formyl-2'-deoxycytidine in DNA + 2-oxoglutarate + O2 = a 5-carboxyl-2'-deoxycytidine in DNA + succinate + CO2 + H(+). In terms of biological role, dioxygenase that catalyzes the conversion of the modified genomic base 5-methylcytosine (5mC) into 5-hydroxymethylcytosine (5hmC) and plays a key role in active DNA demethylation. Has a preference for 5-hydroxymethylcytosine in CpG motifs. Also mediates subsequent conversion of 5hmC into 5-formylcytosine (5fC), and conversion of 5fC to 5-carboxylcytosine (5caC). Conversion of 5mC into 5hmC, 5fC and 5caC probably constitutes the first step in cytosine demethylation. Methylation at the C5 position of cytosine bases is an epigenetic modification of the mammalian genome which plays an important role in transcriptional regulation. In addition to its role in DNA demethylation, also involved in the recruitment of the O-GlcNAc transferase OGT to CpG-rich transcription start sites of active genes, thereby promoting histone H2B GlcNAcylation by OGT. This is Methylcytosine dioxygenase TET2 (TET2) from Homo sapiens (Human).